We begin with the raw amino-acid sequence, 374 residues long: Alanine racemase (374 aa).

The active-site Proton acceptor; specific for D-alanine is the K34. K34 carries the post-translational modification N6-(pyridoxal phosphate)lysine. R138 is a binding site for substrate. The active-site Proton acceptor; specific for L-alanine is the Y265. A substrate-binding site is contributed by M313.

Belongs to the alanine racemase family. The cofactor is pyridoxal 5'-phosphate.

The catalysed reaction is L-alanine = D-alanine. Its pathway is amino-acid biosynthesis; D-alanine biosynthesis; D-alanine from L-alanine: step 1/1. Catalyzes the interconversion of L-alanine and D-alanine. May also act on other amino acids. This Hahella chejuensis (strain KCTC 2396) protein is Alanine racemase (alr).